The chain runs to 92 residues: RNA-binding protein Hfq (92 aa).

A Sm domain is found at 11-71 (DRFLNHLRVN…ISTIIPSSYV (61 aa)).

It belongs to the Hfq family. In terms of assembly, homohexamer.

In terms of biological role, RNA chaperone that binds small regulatory RNA (sRNAs) and mRNAs to facilitate mRNA translational regulation in response to envelope stress, environmental stress and changes in metabolite concentrations. Also binds with high specificity to tRNAs. The polypeptide is RNA-binding protein Hfq (Thermotoga maritima (strain ATCC 43589 / DSM 3109 / JCM 10099 / NBRC 100826 / MSB8)).